Consider the following 607-residue polypeptide: Rap1 GTPase-GDP dissociation stimulator 1 (607 aa).

The short motif at 4 to 13 (LSDTLKKLKI) is the Nuclear export signal (NES) element. ARM repeat units lie at residues 89–131 (GLIS…DQAG) and 170–211 (DSLQ…NLAE). The tract at residues 122 to 170 (EGRSAVDQAGGAQIVIDHLRSLCSITDPANEKLLTVFCGMLMNYSNEND) is prevents binding to prenylated RHOA. K230 bears the N6-acetyllysine mark. The segment at 239-255 (DKREMIFEVLAPLAEND) is interacts with polybasic regions in GTPases. ARM repeat units lie at residues 347-390 (DANC…NLAI), 391-431 (PVIN…MLID), and 479-519 (SKDV…LIAA). Residues 379 to 428 (HAALSALRNLAIPVINKAKMLSAGVTEAVLKFLKSEMPPVQFKLLGTLRM) form a critical for catalytic activity region.

Interacts with RABL3. Interacts with RHOT1. In terms of assembly, interacts with unprenylated RHOA; the interaction is direct. Interacts with RAP1A. Interacts with KRAS. Interacts with RAC1. Interacts with RAP1B. Preferentially interacts with unprenylated GTPases that will become geranylgeranylated. May also interact with prenylated GTPases. As to quaternary structure, interacts with prenylated RHOA; the interaction is direct and in a 1:1 stoichiometry. Interacts with RAP1A. Interacts with KRAS. Interacts with RAC1. Interacts with RAP1B. Preferentially interacts with prenylated GTPases. In terms of processing, forms covalent cross-links mediated by transglutaminase TGM2, between a glutamine and the epsilon-amino group of a lysine residue, forming homopolymers and heteropolymers.

The protein localises to the cytoplasm. It is found in the cytosol. It localises to the endoplasmic reticulum. The protein resides in the mitochondrion. Its subcellular location is the nucleus. Its function is as follows. Acts as a GEF (guanine nucleotide exchange factor) for the Rho family of small GTP-binding proteins (G proteins) that stimulates the dissociation of GDP to enable subsequent binding of GTP. Additionally, appears to chaperone the processing and/or trafficking of small GTPases containing a C-terminal polybasic region independently of GEF activity. Targets include RAP1A/RAP1B, RHOA, RHOB, RHOC, RAC1 and KRAS. Regulates mitochondrial dynamics by controlling RHOT function to promote mitochondrial fission during high calcium conditions. Able to promote the Ca(2+) release from the endoplasmic reticulum via both inositol trisphosphate (Ins3P) and ryanodine sensitive receptors leading to a enhanced mitochondrial Ca(2+) uptake. In terms of biological role, acts as a GEF (guanine nucleotide exchange factor) for unprenylated RHOA. Chaperones the entry and passage of small GTPases through the prenylation pathway. Recognizes the last amino acid in the GTPase C-terminal CAAX motif with a preference for 'Leu' over 'Met', indicating involvement in the geranylgeranylation pathway. Functionally, acts as a GEF (guanine nucleotide exchange factor) for prenylated RHOA. Acts as a GEF for RHOC. Chaperones the downstream trafficking and/or processing of small newly prenylated GTPases. Escorts RAC1 to the nucleus. The chain is Rap1 GTPase-GDP dissociation stimulator 1 from Homo sapiens (Human).